The sequence spans 263 residues: Thiamine thiazole synthase (263 aa).

NAD(+) is bound by residues serine 43, 62–63 (ER), glycine 70, valine 134, and 160–162 (HID). 2 residues coordinate Fe cation: aspartate 162 and histidine 177. Residues serine 180 and methionine 227 each contribute to the NAD(+) site. Arginine 237 is a binding site for glycine.

It belongs to the THI4 family. As to quaternary structure, homooctamer; tetramer of dimers. It depends on Fe(2+) as a cofactor.

It catalyses the reaction hydrogen sulfide + glycine + NAD(+) = ADP-5-ethyl-4-methylthiazole-2-carboxylate + nicotinamide + 3 H2O + H(+). It participates in cofactor biosynthesis; thiamine diphosphate biosynthesis. Its function is as follows. Involved in the biosynthesis of the thiazole moiety of thiamine. Catalyzes the conversion of NAD and glycine to adenosine diphosphate 5-(2-hydroxyethyl)-4-methylthiazole-2-carboxylate (ADT), an adenylated thiazole intermediate, using free sulfide as a source of sulfur. In Methanococcus aeolicus (strain ATCC BAA-1280 / DSM 17508 / OCM 812 / Nankai-3), this protein is Thiamine thiazole synthase.